A 335-amino-acid chain; its full sequence is UDP-3-O-acylglucosamine N-acyltransferase (335 aa).

H225 functions as the Proton acceptor in the catalytic mechanism.

Belongs to the transferase hexapeptide repeat family. LpxD subfamily. In terms of assembly, homotrimer.

The enzyme catalyses a UDP-3-O-[(3R)-3-hydroxyacyl]-alpha-D-glucosamine + a (3R)-hydroxyacyl-[ACP] = a UDP-2-N,3-O-bis[(3R)-3-hydroxyacyl]-alpha-D-glucosamine + holo-[ACP] + H(+). The protein operates within bacterial outer membrane biogenesis; LPS lipid A biosynthesis. Its function is as follows. Catalyzes the N-acylation of UDP-3-O-acylglucosamine using 3-hydroxyacyl-ACP as the acyl donor. Is involved in the biosynthesis of lipid A, a phosphorylated glycolipid that anchors the lipopolysaccharide to the outer membrane of the cell. The protein is UDP-3-O-acylglucosamine N-acyltransferase of Delftia acidovorans (strain DSM 14801 / SPH-1).